Consider the following 689-residue polypeptide: Glycine--tRNA ligase beta subunit (689 aa).

The protein belongs to the class-II aminoacyl-tRNA synthetase family. Tetramer of two alpha and two beta subunits.

The protein localises to the cytoplasm. The catalysed reaction is tRNA(Gly) + glycine + ATP = glycyl-tRNA(Gly) + AMP + diphosphate. The protein is Glycine--tRNA ligase beta subunit of Salmonella heidelberg (strain SL476).